Reading from the N-terminus, the 492-residue chain is Histone-lysine N-methyltransferase PRDM7 (492 aa).

Residues 1–22 form a disordered region; sequence MSPERSQEESPEGDTERTERKP. A KRAB-related domain is found at 23–86; that stretch reads MVKDAFKDIS…RRQAIKLQVD (64 aa). The tract at residues 111–179 is disordered; that stretch reads EQSKHQKGMP…ELRRKETEGK (69 aa). The segment covering 135-150 has biased composition (polar residues); it reads GTPNLLNTSDSEQAQK. Positions 167–179 are enriched in basic and acidic residues; it reads LKLELRRKETEGK. Positions 244-358 constitute an SET domain; the sequence is PGLRIGPSGI…PGCELLVWSG (115 aa).

The protein localises to the nucleus. The protein resides in the chromosome. The catalysed reaction is N(6),N(6)-dimethyl-L-lysyl(4)-[histone H3] + S-adenosyl-L-methionine = N(6),N(6),N(6)-trimethyl-L-lysyl(4)-[histone H3] + S-adenosyl-L-homocysteine + H(+). Functionally, histone methyltransferase that selectively methylates 'Lys-4' of dimethylated histone H3 (H3K4me2) to produce trimethylated 'Lys-4' histone H3 (H3K4me3). May play a role in epigenetic regulation of gene expression by defining an active chromatin state. This Homo sapiens (Human) protein is Histone-lysine N-methyltransferase PRDM7.